Consider the following 117-residue polypeptide: Large-conductance mechanosensitive channel (117 aa).

A run of 3 helical transmembrane segments spans residues Glu-7–Phe-27, Ile-30–Val-50, and Gly-64–Val-84.

The protein belongs to the MscL family. Homopentamer.

It is found in the cell membrane. Its function is as follows. Channel that opens in response to stretch forces in the membrane lipid bilayer. May participate in the regulation of osmotic pressure changes within the cell. This chain is Large-conductance mechanosensitive channel, found in Staphylococcus haemolyticus (strain JCSC1435).